Consider the following 282-residue polypeptide: 2-dehydro-3-deoxyphosphooctonate aldolase (282 aa).

The protein belongs to the KdsA family.

It is found in the cytoplasm. The enzyme catalyses D-arabinose 5-phosphate + phosphoenolpyruvate + H2O = 3-deoxy-alpha-D-manno-2-octulosonate-8-phosphate + phosphate. It functions in the pathway carbohydrate biosynthesis; 3-deoxy-D-manno-octulosonate biosynthesis; 3-deoxy-D-manno-octulosonate from D-ribulose 5-phosphate: step 2/3. The protein operates within bacterial outer membrane biogenesis; lipopolysaccharide biosynthesis. The polypeptide is 2-dehydro-3-deoxyphosphooctonate aldolase (Shewanella halifaxensis (strain HAW-EB4)).